Here is a 328-residue protein sequence, read N- to C-terminus: Stress response kinase A (328 aa).

Asp201 (proton acceptor) is an active-site residue. Asn206 and Asp217 together coordinate Mg(2+). Asp217 is an active-site residue.

The protein belongs to the SrkA/RdoA protein kinase family. As to quaternary structure, monomer. Mg(2+) is required as a cofactor.

It localises to the cytoplasm. The catalysed reaction is L-seryl-[protein] + ATP = O-phospho-L-seryl-[protein] + ADP + H(+). The enzyme catalyses L-threonyl-[protein] + ATP = O-phospho-L-threonyl-[protein] + ADP + H(+). Functionally, a protein kinase that phosphorylates Ser and Thr residues. Probably acts to suppress the effects of stress linked to accumulation of reactive oxygen species. Probably involved in the extracytoplasmic stress response. The protein is Stress response kinase A of Salmonella paratyphi A (strain ATCC 9150 / SARB42).